Reading from the N-terminus, the 140-residue chain is Large-conductance mechanosensitive channel (140 aa).

A run of 2 helical transmembrane segments spans residues 16 to 36 (VIDL…VTAL) and 84 to 104 (INTV…VKLI).

It belongs to the MscL family. In terms of assembly, homopentamer.

The protein localises to the cell inner membrane. Functionally, channel that opens in response to stretch forces in the membrane lipid bilayer. May participate in the regulation of osmotic pressure changes within the cell. The sequence is that of Large-conductance mechanosensitive channel from Xanthomonas oryzae pv. oryzae (strain MAFF 311018).